A 346-amino-acid chain; its full sequence is Cyclic GMP-AMP synthase-like protein (346 aa).

Residues Ser-58 and 70–72 (EFD) each bind ATP. Residues Glu-70, Asp-72, and Asp-165 each coordinate Mg(2+). GTP contacts are provided by residues Asp-165 and 212–219 (MVCAPHWE). ATP contacts are provided by residues 216–219 (PHWE), Lys-237, and 252–256 (SYMLK).

It belongs to the mab-21 family. Mg(2+) serves as cofactor. It depends on Mn(2+) as a cofactor.

With respect to regulation, activated in response of some unknown stimulus. Not activated in response to L-monocytogenes infection. Probable nucleotidyltransferase that catalyzes the formation of cyclic dinucleotide second messenger in response to some unknown stimulus. Does not catalyze the formation of cyclic GMP-AMP from ATP and GTP. In Drosophila melanogaster (Fruit fly), this protein is Cyclic GMP-AMP synthase-like protein.